A 350-amino-acid chain; its full sequence is MNGTEGPNFYVPMSNATGVVRSPFEYPQYYLAEPWAFSILAAYMFFLIITGFPINFLTLYVTIEHKKLRTPLNYILLNLAVADLFMVFGGFTTTMYTSMHGYFVFGETGCNLEGYFATLGGEISLWSLVVLAIERWVVVCKPISNFRFGENHAIMGLTLTWVMANACAMPPLFGWSRYIPEGLQCSCGIDYYTLKPEVNNESFVIYMFLVHFTIPLTIISFCYGRLVCAVKEAAAQQQESETTQRAEREVTRMVVIMVISFLVCWIPYASVAWYIFTHQGSTFGPIFMTVPSFFAKSSSIYNPMIYICMNKQFRNCMITTLFCGKNPFEGEEEGSTTKTEASAVSSVSPA.

The Extracellular segment spans residues M1–A36. N2 and N15 each carry an N-linked (GlcNAc...) asparagine glycan. A helical membrane pass occupies residues F37–V61. The Cytoplasmic portion of the chain corresponds to T62–N73. A helical membrane pass occupies residues Y74–S98. Over M99–E113 the chain is Extracellular. A disulfide bridge connects residues C110 and C187. Residues G114 to I133 traverse the membrane as a helical segment. Topologically, residues E134 to H152 are cytoplasmic. A helical transmembrane segment spans residues A153–S176. The Extracellular portion of the chain corresponds to R177 to S202. N-linked (GlcNAc...) asparagine glycosylation occurs at N200. Residues F203–V230 traverse the membrane as a helical segment. Over K231 to R252 the chain is Cytoplasmic. A helical transmembrane segment spans residues M253–F276. Residues T277 to G284 are Extracellular-facing. Residues P285–M309 form a helical membrane-spanning segment. At K296 the chain carries N6-(retinylidene)lysine. Topologically, residues N310–A350 are cytoplasmic. The interval G330–A350 is disordered.

This sequence belongs to the G-protein coupled receptor 1 family. Opsin subfamily. Post-translationally, phosphorylated on some or all of the serine and threonine residues present in the C-terminal region. In terms of tissue distribution, rod shaped photoreceptor cells which mediates vision in dim light.

Its subcellular location is the membrane. Functionally, visual pigments are the light-absorbing molecules that mediate vision. They consist of an apoprotein, opsin, covalently linked to cis-retinal. This is Blue-sensitive opsin from Conger conger (Conger eel).